We begin with the raw amino-acid sequence, 332 residues long: Transcription factor ZEB2 (332 aa).

Residues 1-37 (MQSTESFHALPTRSDVEDPNERRKIQNRIAQKKHRQK) are disordered. The span at 14–24 (SDVEDPNERRK) shows a compositional bias: basic and acidic residues. One can recognise a bZIP domain in the interval 17–50 (EDPNERRKIQNRIAQKKHRQKMKRRIEELETKVN). The basic motif stretch occupies residues 21-43 (ERRKIQNRIAQKKHRQKMKRRIE). A leucine-zipper region spans residues 45–52 (LETKVNNQ). Positions 106–170 (MHDSPRPNQQ…EGSLPTRQHD (65 aa)) are disordered. Over residues 111-134 (RPNQQQRLSVSGMPSSPTSTSNVA) the composition is skewed to polar residues. Residues 143-155 (HSSASNHLSSLSL) show a composition bias toward low complexity. The span at 160–170 (TEGSLPTRQHD) shows a compositional bias: polar residues.

It belongs to the bZIP family.

Its subcellular location is the nucleus. Functionally, transcription factor that specifically controls transcription of the zearalenone biosynthesis cluster genes. This chain is Transcription factor ZEB2, found in Gibberella zeae (strain ATCC MYA-4620 / CBS 123657 / FGSC 9075 / NRRL 31084 / PH-1) (Wheat head blight fungus).